Reading from the N-terminus, the 411-residue chain is MELSSVSSFSLGTNPFISIPHNNNNLKVSSYCCKSKSRVINSTNSKHCSPNNNNNTSNKTTHLLGLYGQSRCLLKPLSFISCNDQRGNSIRASAQIEDRPPESGNLSALTNVKDFVSVCWEYVRPYTAKGVIICSSCLFGRELLENPNLFSRPLIFRALLGMLAILGSCFYTAGINQIFDMDIDRINKPDLPLVSGRISVESAWLLTLSPAIIGFILILKLNSGPLLTSLYCLAILSGTIYSVPPFRWKKNPITAFLCILMIHAGLNFSVYYASRAALGLAFAWSPSFSFITAFITFMTLTLASSKDLSDINGDRKFGVETFATKLGAKNITLLGTGLLLLNYVAAISTAIIWPKAFKSNIMLLSHAILAFSLIFQARELDRTNYTPEACKSFYEFIWILFSAEYVVYLFI.

Residues 1-91 constitute a chloroplast transit peptide; sequence MELSSVSSFS…CNDQRGNSIR (91 aa). A run of 8 helical transmembrane segments spans residues 159 to 179, 198 to 218, 226 to 246, 253 to 273, 278 to 298, 333 to 353, 356 to 376, and 391 to 411; these read LLGM…NQIF, ISVE…FILI, LLTS…VPPF, ITAF…VYYA, LGLA…ITFM, LLGT…AIIW, AFKS…LIFQ, and KSFY…YLFI.

This sequence belongs to the UbiA prenyltransferase family. Mg(2+) is required as a cofactor. As to expression, expressed in glandular trichomes called lupulin glands, and in early stage and mature cones. Detected in leaves, but not in root, stem and first stage of flowers. No expression in male flowers.

The protein resides in the plastid. The protein localises to the chloroplast membrane. It carries out the reaction a 2-acylphloroglucinol + dimethylallyl diphosphate = a 2-acyl-4-prenylphloroglucinol + diphosphate. The protein operates within secondary metabolite biosynthesis. In terms of biological role, involved in the biosynthesis of prenylated phenolics natural products which contribute to the bitter taste of beer and display broad biological activities. Catalyzes the first prenylation step in the beta-bitter acid pathway. Abble to transfer dimethylallyl diphosphate (DMAPP) or geranyl diphosphate (GPP) to phlorisovalerophenone (PIVP), phlorisobutrylphenone (PIMP) and naringenin chalcone. Can also use phlorisobutyrophenone (PIBP) and phlormethylbutanophenone (PMBP) as substrates, but not 6'-O-methylated chalcone or naringenin. The protein is 2-acylphloroglucinol 4-prenyltransferase, chloroplastic of Humulus lupulus (European hop).